We begin with the raw amino-acid sequence, 238 residues long: Probable transcriptional regulatory protein YeeN (238 aa).

The protein belongs to the TACO1 family. YeeN subfamily.

It is found in the cytoplasm. This Salmonella choleraesuis (strain SC-B67) protein is Probable transcriptional regulatory protein YeeN.